A 473-amino-acid polypeptide reads, in one-letter code: Bactericidal permeability-increasing protein (473 aa).

Residues 1–18 (MVLCCWLALVALIPMTLS) form the signal peptide. The tract at residues 19 to 29 (INPGVKVRLTG) is central sheet, part 1. The interval 28 to 209 (TGKGLEYGRQ…SDLNPQLKTL (182 aa)) is N-terminal barrel. Cys153 and Cys192 are oxidised to a cystine. A central sheet, part 2 region spans residues 211 to 275 (VLAKVDQYAE…INNMLYISVS (65 aa)). Residues 225 to 230 (MVSSPT) form a cleavage sites for elastase region. Positions 276-446 (AFTINSAAFV…LAKGYPLPTL (171 aa)) are C-terminal barrel. N-linked (GlcNAc...) asparagine glycosylation is present at Asn365. A central sheet, part 3 region spans residues 453–472 (NTELQVLKDYMLIGTDVQFT).

The protein belongs to the BPI/LBP/Plunc superfamily. BPI/LBP family. In terms of assembly, monomer. Homodimer; disulfide-linked. As to expression, expressed in spleen. Lower expression in gill, head kidney, entire kidney, skin, intestine and blood and lowest expression in liver and muscle.

It localises to the secreted. The cytotoxic action of BPI is limited to many species of Gram-negative bacteria; this specificity may be explained by a strong affinity of the very basic N-terminal half for the negatively charged lipopolysaccharides that are unique to the Gram-negative bacterial outer envelope. Exhibits neutralizing capacity towards P.aeruginosa lipopolysaccharides (LPS) and has bactericidal activity against multiple drug resistant (MDR) P.aeruginosa strains derived from people with cystic fibrosis. Has antibacterial activity against E.coli, but not against S.iniae. The sequence is that of Bactericidal permeability-increasing protein from Sebastes schlegelii (Korean rockfish).